A 304-amino-acid polypeptide reads, in one-letter code: Recombination-associated protein RdgC (304 aa).

Belongs to the RdgC family.

Its subcellular location is the cytoplasm. It localises to the nucleoid. Functionally, may be involved in recombination. This Shewanella baltica (strain OS185) protein is Recombination-associated protein RdgC.